We begin with the raw amino-acid sequence, 203 residues long: Large ribosomal subunit protein uL13 (203 aa).

Ala2 carries the N-acetylalanine modification. Residue Arg59 is modified to Citrulline. Ser77 carries the post-translational modification Phosphoserine. Position 140 is a citrulline (Arg140). At Lys191 the chain carries N6-acetyllysine.

Belongs to the universal ribosomal protein uL13 family. Component of the 60S ribosome. Component of the GAIT complex. Interacts with EIF4G1. Post-translationally, phosphorylation at Ser-77 upon interferon-gamma treatment in macrophages involves a DAPK1-DAPK3 kinase cascade and is causing release from the ribosome, association with the GAIT complex and subsequent involvement in transcript-selective translation inhibition. Citrullinated by PADI4.

The protein localises to the cytoplasm. Functionally, associated with ribosomes but is not required for canonical ribosome function and has extra-ribosomal functions. Component of the GAIT (gamma interferon-activated inhibitor of translation) complex which mediates interferon-gamma-induced transcript-selective translation inhibition in inflammation processes. Upon interferon-gamma activation and subsequent phosphorylation dissociates from the ribosome and assembles into the GAIT complex which binds to stem loop-containing GAIT elements in the 3'-UTR of diverse inflammatory mRNAs (such as ceruplasmin) and suppresses their translation. In the GAIT complex interacts with m7G cap-bound eIF4G at or near the eIF3-binding site and blocks the recruitment of the 43S ribosomal complex. Involved in methylation of rRNA. This is Large ribosomal subunit protein uL13 (Rpl13a) from Rattus norvegicus (Rat).